The sequence spans 218 residues: Transmembrane gamma-carboxyglutamic acid protein 1 (218 aa).

The propeptide occupies Met1–Arg20. In terms of domain architecture, Gla spans Arg20–Lys66. The Extracellular portion of the chain corresponds to Ala21–Gln80. An intrachain disulfide couples Cys37 to Cys42. A helical membrane pass occupies residues Phe81–Ile101. The Cytoplasmic segment spans residues Trp102–Lys218. The segment at Ser160–Pro192 is disordered. The segment covering Arg182 to Pro192 has biased composition (basic and acidic residues).

In terms of processing, gla residues are produced after subsequent post-translational modifications of glutamate by a vitamin K-dependent gamma-carboxylase.

It is found in the membrane. The protein is Transmembrane gamma-carboxyglutamic acid protein 1 (PRRG1) of Bos taurus (Bovine).